A 2183-amino-acid chain; its full sequence is DNA polymerase epsilon catalytic subunit A (2183 aa).

Positions 2066, 2069, 2090, and 2093 each coordinate Zn(2+). A CysA-type zinc finger spans residues 2066 to 2093; it reads CFKCKNPCDLDLCKDSCCTKSGFRCPLC. Positions 2124, 2127, 2139, and 2141 each coordinate [4Fe-4S] cluster. The short motif at 2124–2141 is the CysB motif element; it reads CDKCRRVKEYELTEFCPC.

Belongs to the DNA polymerase type-B family. In terms of assembly, heterotetramer. Consists of 4 subunits: POL2, DPB2, DPB3 and DPB4. Requires [4Fe-4S] cluster as cofactor.

The protein resides in the nucleus. It carries out the reaction DNA(n) + a 2'-deoxyribonucleoside 5'-triphosphate = DNA(n+1) + diphosphate. Its function is as follows. DNA polymerase II participates in chromosomal DNA replication. This chain is DNA polymerase epsilon catalytic subunit A (POL2), found in Yarrowia lipolytica (strain CLIB 122 / E 150) (Yeast).